A 148-amino-acid polypeptide reads, in one-letter code: UPF0134 protein MPN_204 (148 aa).

It belongs to the UPF0134 family.

This chain is UPF0134 protein MPN_204, found in Mycoplasma pneumoniae (strain ATCC 29342 / M129 / Subtype 1) (Mycoplasmoides pneumoniae).